A 962-amino-acid polypeptide reads, in one-letter code: Putative primase C962R (962 aa).

The SF3 helicase domain maps to 607–775 (ELDARLWIMF…PDPNNSYEKK (169 aa)). ATP is bound at residue 636 to 643 (GGGCNGKT).

This sequence belongs to the asfivirus helicase C962R family.

The sequence is that of Putative primase C962R from Ornithodoros (relapsing fever ticks).